Reading from the N-terminus, the 157-residue chain is Protein Smg homolog (157 aa).

This sequence belongs to the Smg family.

The sequence is that of Protein Smg homolog from Tolumonas auensis (strain DSM 9187 / NBRC 110442 / TA 4).